The following is a 1485-amino-acid chain: Chromosome partition protein MukB (1485 aa).

Position 34 to 41 (34 to 41 (GGNGAGKS)) interacts with ATP. Coiled coils occupy residues 337-480 (LNLV…QAYQ), 509-605 (QHLA…PVWL), 780-805 (RAAR…ATLS), 835-915 (EAEI…IQQH), 977-1116 (GMLT…AKAG), and 1210-1235 (EAIE…KLAI). The segment at 666-783 (PSGAEDARLI…EVPLFGRAAR (118 aa)) is flexible hinge.

This sequence belongs to the SMC family. MukB subfamily. In terms of assembly, homodimerization via its hinge domain. Binds to DNA via its C-terminal region. Interacts, and probably forms a ternary complex, with MukE and MukF via its C-terminal region. The complex formation is stimulated by calcium or magnesium. Interacts with tubulin-related protein FtsZ.

It is found in the cytoplasm. It localises to the nucleoid. In terms of biological role, plays a central role in chromosome condensation, segregation and cell cycle progression. Functions as a homodimer, which is essential for chromosome partition. Involved in negative DNA supercoiling in vivo, and by this means organize and compact chromosomes. May achieve or facilitate chromosome segregation by condensation DNA from both sides of a centrally located replisome during cell division. This Yersinia pestis bv. Antiqua (strain Antiqua) protein is Chromosome partition protein MukB.